The chain runs to 316 residues: Transaldolase (316 aa).

The Schiff-base intermediate with substrate role is filled by K131.

It belongs to the transaldolase family. Type 1 subfamily. Homodimer.

It is found in the cytoplasm. The catalysed reaction is D-sedoheptulose 7-phosphate + D-glyceraldehyde 3-phosphate = D-erythrose 4-phosphate + beta-D-fructose 6-phosphate. It participates in carbohydrate degradation; pentose phosphate pathway; D-glyceraldehyde 3-phosphate and beta-D-fructose 6-phosphate from D-ribose 5-phosphate and D-xylulose 5-phosphate (non-oxidative stage): step 2/3. Functionally, transaldolase is important for the balance of metabolites in the pentose-phosphate pathway. The sequence is that of Transaldolase from Buchnera aphidicola subsp. Acyrthosiphon pisum (strain 5A).